We begin with the raw amino-acid sequence, 184 residues long: MKNQKKLIILTGPSGVGKGTVIKEILGKDKNIWLSISATTREPREGEQEGENYYFLKQEKFKEMIEKNLFLEWAQFAGNYYGTPLSSVNEKITKGFTVLLEIEVEGAKQIKEKFPESLSIFLLPPDKAELERRIRNRGTEKEEAIKKRLLRASYEISASNQFDFELTNHNVDETAKRIIKLIQT.

Positions Lys-5–Gln-183 constitute a Guanylate kinase-like domain. Gly-12 to Gly-19 is an ATP binding site.

The protein belongs to the guanylate kinase family.

It is found in the cytoplasm. The catalysed reaction is GMP + ATP = GDP + ADP. Its function is as follows. Essential for recycling GMP and indirectly, cGMP. The polypeptide is Guanylate kinase (Prochlorococcus marinus (strain MIT 9312)).